The following is a 1578-amino-acid chain: MEEPTVQFSDEDLVDNFPPMDDERVQLEDLEFEVERPSEGLEDEGSHSSAKKESKGAEKMRKSTTKDQVQAFHLRKSLNLLDKMHEEKDVFIQKTKGELHICRQRMDLLNKQQESLAAEIATEKEANNMAAIGRLQAASRRLQTELENEKDLQSKITAMLKDSENAMWHIEIQKGQFEDVRKHHEAEAEARQRGLEVHSARQLQREREAMEKSEKNRLLRARKSLHTQKELGLRHQKLVEDAQRNHRIAVKFLKASLGRVREREQKEEMESRTHMQRRMDAVLSLKNNITASRETLKKFQAWGQTRADLAKQKALTEKEVILSQGGDAFKYLFHQRRHQELEAQKRAFEEEQKLRKQEIVNRILKEEAEEEQRKRRQHPLSKPINRRTLRDKTWQYISDFCEGKSVLTSQQERERELLLYPKTVCVIKAISSESVQVDLGSISTEDEVLAEPDISGLWNKESYQVPKEDMERKPVGGSKMEKDILARTMEQLRSGVVQKQVVSGREFKGRPFNSKPEVIHFKDFDIGKVYKKKITLINATYTINYCKLVGVEENLKDFIHIDFEPPGPMSAGMSCEVLVTFKPMINKDLEGNVSFLAQTGSFSVPLKCSTKKCSLSLDKELIDFGTYVVGETTSRIITLTNVGGLGTKFKFLPDSEFYEMDESQPAMKISSLFTCEEKIIYEKIMTSLSEQQLEVNDSSLVDLQSLKESEKQLDDPEVTTAAVSAMTMIPSEEQAEITLGEVTEGEIGPFSSVKVPITFTPVIPGEVQTKFKVMFKNPQSPPLYFRATGTAIDVPVWVPKATVDLKICMYDRLYQDSITVHTRSKAALRLKFEVCKELRGHIELLPETGYIQAQSTYSVQLKFLPRQSLPEDARKYFDPASRVLEAPMTIRVADQIKPVRFTVQAIVTTSDLEINPSEINFGYCTIYEAIRTEICLSNLSLLPQEFGFVGLPKYVDIQPNDGFGTILPLETLHLDVIFQPIKAKEYKFELVCKSEINRCFKVSCQAVGVHPPLELSHYQIKFSATSLYDTSVSTLYVINSHLSMNKMIHSLPRIGSEEAAPVGPTSFEFLLPPNSPITISPSVGTVLPGKRCLIQVAFQPVLPKEIIYKEASQILNKEIETKPVSQKEIVQRKELWKQSFSVVRVHNRDRPTRVSTPQATELQRPVINSSSTEFQIAQATLSKAFQGKFNRFVIPCVVASGDIKDRKTAEPLSFSPHNTLYLELWCPAVAPFIVVTSHKGKTDFNFGDIAVGHRSVKKITLQNICNEDLTLEYSVLNPNGPFVRLNPFNKLRSGETQTLVLSFSPHENILAQETLDIITKRGTLSLTLFGMGVASMITCSIDGNILNMGYVLARESVSTNFKLQNESSLPIKFWVRLESLSRKKAEAHQQLPKFITSHEQRAEIVGTQNYNGQSVFSIVPVEGLMFPGKAQEFTVTFSPDHESLFFSDLLKVVLFEKKVSHQILLKGAAREHMMFVEGGDPLDVPVESLAVVTAFDTEHKEEAEELKPILVTLNYVQLDTDTTTSPATRELQVGCIRTTQPSPRRPDHPLMVSTLLQLRGDVKETYKVTFVAHVVTGL.

The span at 1–14 (MEEPTVQFSDEDLV) shows a compositional bias: acidic residues. 2 disordered regions span residues 1 to 21 (MEEPTVQFSDEDLVDNFPPMD) and 33 to 67 (EVERPSEGLEDEGSHSSAKKESKGAEKMRKSTTKD). Residues 33–65 (EVERPSEGLEDEGSHSSAKKESKGAEKMRKSTT) show a composition bias toward basic and acidic residues. 2 coiled-coil regions span residues 103–156 (RQRM…QSKI) and 330–378 (KYLF…RRQH).

This sequence belongs to the CFAP74 family.

The protein resides in the cytoplasm. Its subcellular location is the cytoskeleton. It localises to the cilium axoneme. It is found in the flagellum axoneme. In terms of biological role, as part of the central apparatus of the cilium axoneme may play a role in cilium movement. May play an important role in sperm architecture and function. The protein is Cilia- and flagella-associated protein 74 of Mus musculus (Mouse).